Consider the following 340-residue polypeptide: Uroporphyrinogen decarboxylase (340 aa).

Substrate-binding positions include R21–R25, F40, D71, Y147, S202, and H316.

The protein belongs to the uroporphyrinogen decarboxylase family. Homodimer.

It is found in the cytoplasm. It carries out the reaction uroporphyrinogen III + 4 H(+) = coproporphyrinogen III + 4 CO2. It functions in the pathway porphyrin-containing compound metabolism; protoporphyrin-IX biosynthesis; coproporphyrinogen-III from 5-aminolevulinate: step 4/4. Functionally, catalyzes the decarboxylation of four acetate groups of uroporphyrinogen-III to yield coproporphyrinogen-III. The protein is Uroporphyrinogen decarboxylase of Helicobacter hepaticus (strain ATCC 51449 / 3B1).